The sequence spans 89 residues: Teretoxin Tan6.8 (89 aa).

The N-terminal stretch at 1–21 (MRLLLILLLLTPVILAGSLDE) is a signal peptide. The disordered stretch occupies residues 22–42 (EPNNADGANAASFTADQEGRH). Residues 22–44 (EPNNADGANAASFTADQEGRHKR) constitute a propeptide that is removed on maturation.

In terms of processing, contains 3 disulfide bonds. As to expression, expressed by the venom duct.

The protein localises to the secreted. The sequence is that of Teretoxin Tan6.8 from Terebra anilis (Auger snail).